Here is a 369-residue protein sequence, read N- to C-terminus: Extracellular signal-regulated kinase 2 (369 aa).

Positions 14–304 (YEVLQKIGKG…AEEALAHPFV (291 aa)) constitute a Protein kinase domain. ATP-binding positions include 20-28 (IGKGAYGIV) and Lys43. The active-site Proton acceptor is Asp137. Thr176 carries the post-translational modification Phosphothreonine. The TXY motif lies at 176-178 (TEY). Phosphotyrosine is present on Tyr178. A disordered region spans residues 346–369 (KKKEERKKQTNPTKPDTTAPTLST). The segment covering 355-369 (TNPTKPDTTAPTLST) has biased composition (polar residues).

This sequence belongs to the protein kinase superfamily. CMGC Ser/Thr protein kinase family. MAP kinase subfamily. Requires Mg(2+) as cofactor. In terms of processing, dually phosphorylated on Thr-176 and Tyr-178, which activates the enzyme.

The catalysed reaction is L-seryl-[protein] + ATP = O-phospho-L-seryl-[protein] + ADP + H(+). The enzyme catalyses L-threonyl-[protein] + ATP = O-phospho-L-threonyl-[protein] + ADP + H(+). With respect to regulation, activated by tyrosine and threonine phosphorylation. Implicated in the relay of the cAMP chemotactic signal and cell differentiation. Important for receptor-mediated activation of adenylyl cyclase. This is Extracellular signal-regulated kinase 2 (erkB) from Dictyostelium discoideum (Social amoeba).